We begin with the raw amino-acid sequence, 177 residues long: Plasmid transfer protein TraF (177 aa).

Positions Met1–Ala30 are cleaved as a signal peptide.

The protein belongs to the peptidase S26C family.

It localises to the periplasm. Its function is as follows. Required for donor-specific phage sensitivity. May be involved in pilus assembly. This chain is Plasmid transfer protein TraF (traF), found in Escherichia coli.